The following is a 166-amino-acid chain: Bud site selection protein 20 (166 aa).

Residues 7-16 carry the Nuclear localization signal motif; the sequence is KRYKTKRRTR. Residues 17–31 form a nuclear export signal-like (NES-like) region; it reads DLDLIYNDLSTKESV. Residues 49–73 form a C2H2-type zinc finger; the sequence is HYCIHCAKYMETAIALKTHLKGKVH.

This sequence belongs to the ZNF593/BUD20 C2H2-type zinc-finger protein family. Associates with pre-60S ribosomal particles; released from the pre-60S particle very early in the cytoplasm.

It is found in the nucleus. The protein localises to the cytoplasm. Involved in pre-60S ribosomal particles maturation by promoting the nuclear export of the 60S ribosome. Involved in positioning the proximal bud pole signal. The protein is Bud site selection protein 20 of Saccharomyces cerevisiae (strain ATCC 204508 / S288c) (Baker's yeast).